The sequence spans 476 residues: NADP-dependent glyceraldehyde-3-phosphate dehydrogenase (476 aa).

Arg103 contacts substrate. Ser151 is an NADP(+) binding site. 154–155 (NY) contacts substrate. NADP(+) contacts are provided by residues Lys177, Thr180, Asp215, and 230 to 251 (GSTP…MLEL). Catalysis depends on residues Glu250 and Cys284. Substrate is bound at residue 283–285 (RCT). Glu377 contributes to the NADP(+) binding site. Position 437 (Arg437) interacts with substrate.

Belongs to the aldehyde dehydrogenase family. In terms of assembly, homotetramer.

The enzyme catalyses D-glyceraldehyde 3-phosphate + NADP(+) + H2O = (2R)-3-phosphoglycerate + NADPH + 2 H(+). Catalyzes the irreversible NADP-dependent oxidation of glyceraldehyde-3-phosphate to 3-phosphoglycerate. Is not able to use NAD instead of NADP. May play an important role in NADPH production in S.equinus. The polypeptide is NADP-dependent glyceraldehyde-3-phosphate dehydrogenase (gapN) (Streptococcus equinus (Streptococcus bovis)).